A 540-amino-acid polypeptide reads, in one-letter code: Glucose-6-phosphate isomerase (540 aa).

The active-site Proton donor is the E346. Catalysis depends on residues H377 and K505.

Belongs to the GPI family.

The protein localises to the cytoplasm. It carries out the reaction alpha-D-glucose 6-phosphate = beta-D-fructose 6-phosphate. Its pathway is carbohydrate biosynthesis; gluconeogenesis. The protein operates within carbohydrate degradation; glycolysis; D-glyceraldehyde 3-phosphate and glycerone phosphate from D-glucose: step 2/4. Its function is as follows. Catalyzes the reversible isomerization of glucose-6-phosphate to fructose-6-phosphate. This chain is Glucose-6-phosphate isomerase, found in Francisella tularensis subsp. holarctica (strain FTNF002-00 / FTA).